Consider the following 254-residue polypeptide: Allene oxide cyclase 1, chloroplastic (254 aa).

The N-terminal 78 residues, 1-78, are a transit peptide targeting the chloroplast; it reads MASSTISLQS…QNLGNTENPR (78 aa). Over residues 44–56 the composition is skewed to low complexity; the sequence is SNGPGSSSPTSFT. Positions 44–79 are disordered; sequence SNGPGSSSPTSFTPKKKLTPTRALSQNLGNTENPRP. Positions 65-77 are enriched in polar residues; it reads RALSQNLGNTENP.

Belongs to the allene oxide cyclase family. In terms of tissue distribution, highly expressed in fully developed leaves.

The protein resides in the plastid. It is found in the chloroplast. It carries out the reaction (9Z,13S,15Z)-12,13-epoxyoctadeca-9,11,15-trienoate = (9S,13S,15Z)-12-oxophyto-10,15-dienoate. In terms of biological role, involved in the production of 12-oxo-phytodienoic acid (OPDA), a precursor of jasmonic acid. The sequence is that of Allene oxide cyclase 1, chloroplastic (AOC1) from Arabidopsis thaliana (Mouse-ear cress).